Consider the following 172-residue polypeptide: Shikimate kinase (172 aa).

11-16 (GAGKST) contacts ATP. Ser15 contacts Mg(2+). Residues Asp33, Arg57, and Gly79 each coordinate substrate. Residue Arg117 coordinates ATP. Arg136 serves as a coordination point for substrate. Arg153 serves as a coordination point for ATP.

It belongs to the shikimate kinase family. As to quaternary structure, monomer. It depends on Mg(2+) as a cofactor.

The protein resides in the cytoplasm. The enzyme catalyses shikimate + ATP = 3-phosphoshikimate + ADP + H(+). The protein operates within metabolic intermediate biosynthesis; chorismate biosynthesis; chorismate from D-erythrose 4-phosphate and phosphoenolpyruvate: step 5/7. Functionally, catalyzes the specific phosphorylation of the 3-hydroxyl group of shikimic acid using ATP as a cosubstrate. The chain is Shikimate kinase from Pseudomonas fluorescens (strain Pf0-1).